The sequence spans 833 residues: Scavenger receptor class F member 2 (833 aa).

A signal peptide spans 1–33 (MEGAGSRGAGPARRQGARGLGLLLLLWLLPGLA). Residues 34–433 (APQDLNPRGR…ACHLETNQRK (400 aa)) lie on the Extracellular side of the membrane. 6 consecutive EGF-like domains span residues 63–102 (LGDECGIAVCEGNSTCSENEVCVRPGECRCRHGYFGANCD), 114–145 (CKERCSCHPHGQCEDVTGQCTCHARRWGARCE), 140–174 (WGARCEHACQCQHGTCHPRSGACRCEPGWWGAQCA), 175–204 (SACYCSATSRCDPQTGACLCHVGWWGRSCN), 205–233 (NQCACNSSPCEQQSGRCQCRERMFGARCD), and 228–262 (FGARCDRYCQCSHGRCHPVDGTCACDPGYRGKYCR). Cystine bridges form between Cys-67–Cys-78, Cys-72–Cys-90, Cys-92–Cys-101, Cys-118–Cys-126, Cys-120–Cys-133, Cys-135–Cys-144, Cys-148–Cys-155, Cys-150–Cys-162, Cys-164–Cys-173, Cys-177–Cys-185, Cys-179–Cys-192, Cys-194–Cys-203, Cys-207–Cys-214, Cys-209–Cys-221, Cys-223–Cys-232, Cys-236–Cys-243, Cys-238–Cys-250, and Cys-252–Cys-261. Asn-75 carries N-linked (GlcNAc...) asparagine glycosylation. 2 N-linked (GlcNAc...) asparagine glycosylation sites follow: Asn-302 and Asn-357. In terms of domain architecture, EGF-like 7 spans 364–395 (CAFVCSDCGSGHCDFQSGRCLCSPGVHGPHCN). 3 cysteine pairs are disulfide-bonded: Cys-368/Cys-376, Cys-371/Cys-383, and Cys-385/Cys-394. Asn-395 is a glycosylation site (N-linked (GlcNAc...) asparagine). Residues 434 to 454 (GVMGAGALLTLLLGLLLSLLG) traverse the membrane as a helical segment. Topologically, residues 455–833 (CCCACRGKDS…SRAGTAPGAS (379 aa)) are cytoplasmic. 2 positions are modified to phosphoserine: Ser-538 and Ser-600. The disordered stretch occupies residues 578-833 (SLEPTGTSTP…SRAGTAPGAS (256 aa)). Tyr-615 is modified (phosphotyrosine). The segment covering 619-630 (ARREARPARTRN) has biased composition (basic and acidic residues). Ser-638, Ser-640, and Ser-695 each carry phosphoserine. At Thr-712 the chain carries Phosphothreonine. Residues 748-761 (ELRDKTRSLGRAEK) are compositionally biased toward basic and acidic residues. A compositionally biased stretch (low complexity) spans 781 to 798 (ASASEASGSEKAAASAPA). The segment covering 804–816 (KKTPIQKPPRKKS) has biased composition (basic residues).

As to quaternary structure, homophilic and heterophilic interaction via its extracellular domain. Interacts with SCARF1. The heterophilic interaction with SCARF1, which is stronger than the homophilic interaction with itself, is suppressed by the presence of SCARF1 ligand such as Ac-LDL.

Its subcellular location is the membrane. In terms of biological role, probable adhesion protein, which mediates homophilic and heterophilic interactions. In contrast to SCARF1, it poorly mediates the binding and degradation of acetylated low density lipoprotein (Ac-LDL). This chain is Scavenger receptor class F member 2 (Scarf2), found in Mus musculus (Mouse).